The sequence spans 148 residues: Deoxyuridine 5'-triphosphate nucleotidohydrolase (148 aa).

Residues 67 to 69 (RSG), N80, 84 to 86 (LID), and M94 contribute to the substrate site.

This sequence belongs to the dUTPase family. It depends on Mg(2+) as a cofactor.

It carries out the reaction dUTP + H2O = dUMP + diphosphate + H(+). The protein operates within pyrimidine metabolism; dUMP biosynthesis; dUMP from dCTP (dUTP route): step 2/2. In terms of biological role, this enzyme is involved in nucleotide metabolism: it produces dUMP, the immediate precursor of thymidine nucleotides and it decreases the intracellular concentration of dUTP so that uracil cannot be incorporated into DNA. This chain is Deoxyuridine 5'-triphosphate nucleotidohydrolase, found in Burkholderia thailandensis (strain ATCC 700388 / DSM 13276 / CCUG 48851 / CIP 106301 / E264).